The following is a 255-amino-acid chain: Protein C activator (255 aa).

A signal peptide spans 1-18 (MVLIRVLANLLILHLSYA). A propeptide spanning residues 19-24 (QKSSEL) is cleaved from the precursor. Residues 25-246 (VIGGDECNIN…YTDWIQSIIS (222 aa)) enclose the Peptidase S1 domain. Intrachain disulfides connect cysteine 31/cysteine 162, cysteine 49/cysteine 65, cysteine 97/cysteine 253, cysteine 141/cysteine 207, cysteine 173/cysteine 186, and cysteine 197/cysteine 222. N-linked (GlcNAc...) asparagine glycosylation is present at asparagine 45. Catalysis depends on histidine 64, which acts as the Charge relay system. N-linked (GlcNAc...) asparagine glycosylation occurs at asparagine 102. The Charge relay system role is filled by aspartate 109. An N-linked (GlcNAc...) asparagine glycan is attached at asparagine 153. Residue serine 201 is the Charge relay system of the active site.

It belongs to the peptidase S1 family. Snake venom subfamily. In terms of assembly, monomer. Expressed by the venom gland.

It is found in the secreted. Its function is as follows. Snake venom serine protease that selectively cleaves the heavy chain of protein C (PROC). This activation is thrombomodulin-independent. The polypeptide is Protein C activator (Agkistrodon piscivorus leucostoma (Western cottonmouth)).